The chain runs to 112 residues: Nucleoid-associated protein CV_1611 (112 aa).

This sequence belongs to the YbaB/EbfC family. As to quaternary structure, homodimer.

It localises to the cytoplasm. The protein resides in the nucleoid. Functionally, binds to DNA and alters its conformation. May be involved in regulation of gene expression, nucleoid organization and DNA protection. The polypeptide is Nucleoid-associated protein CV_1611 (Chromobacterium violaceum (strain ATCC 12472 / DSM 30191 / JCM 1249 / CCUG 213 / NBRC 12614 / NCIMB 9131 / NCTC 9757 / MK)).